The primary structure comprises 274 residues: Putative phosphoenolpyruvate synthase regulatory protein (274 aa).

154 to 161 lines the ADP pocket; the sequence is AVSRSGKT.

Belongs to the pyruvate, phosphate/water dikinase regulatory protein family. PSRP subfamily.

The enzyme catalyses [pyruvate, water dikinase] + ADP = [pyruvate, water dikinase]-phosphate + AMP + H(+). It carries out the reaction [pyruvate, water dikinase]-phosphate + phosphate + H(+) = [pyruvate, water dikinase] + diphosphate. Functionally, bifunctional serine/threonine kinase and phosphorylase involved in the regulation of the phosphoenolpyruvate synthase (PEPS) by catalyzing its phosphorylation/dephosphorylation. The sequence is that of Putative phosphoenolpyruvate synthase regulatory protein from Alkalilimnicola ehrlichii (strain ATCC BAA-1101 / DSM 17681 / MLHE-1).